The primary structure comprises 737 residues: Protein bicaudal D homolog (737 aa).

Coiled coils occupy residues 1–255, 292–319, and 547–684; these read MAES…RNAE, GSSD…EKIF, and AENE…DRDR. Residues 72-97 are disordered; the sequence is YRSQHQRSTRSELENEESLLEESSAK. The disordered stretch occupies residues 686 to 737; sequence VFKRSSTRAPTRETYQPPRAVRYPGSTTTAQQPAPSSSGGSRGGPRRGDNQQ. The segment covering 710–719 has biased composition (polar residues); that stretch reads GSTTTAQQPA.

Belongs to the BicD family. In terms of assembly, component of a dynein-regulating complex composed of at least bicd-1, dlc-1 and egal-1. Interacts with egal-1 and unc-83. As to expression, expressed in the excretory cell, body wall muscles, vulval muscle cells, PVD and FLP sensory neurons and AVF interneurons.

The protein localises to the nucleus envelope. Its subcellular location is the perikaryon. It localises to the cell projection. The protein resides in the dendrite. Functionally, part of a complex with dlc-1 and egal-1, which is recruited to the nuclear envelope by unc-83, where in turn, it recruits dynein to the nuclear surface and regulates nuclear migration in hypodermal precursor cells. Required for the formation of dendritic branches of PVD sensory neurons. The sequence is that of Protein bicaudal D homolog from Caenorhabditis elegans.